The following is a 167-amino-acid chain: CDP-archaeol synthase (167 aa).

The next 5 helical transmembrane spans lie at 4–24 (ILEAFWYILPAYFANSSPVIL), 51–71 (GFLGGLTVGTLIGVIQQIIYP), 80–100 (FKVSFLLALGALVGDLIGSFI), 104–124 (LNLPPGYPAVGLDQWGFLISA), and 139–158 (VLLLLVVTPLIHWGTNVLAY).

The protein belongs to the CDP-archaeol synthase family. Requires Mg(2+) as cofactor.

Its subcellular location is the cell membrane. It carries out the reaction 2,3-bis-O-(geranylgeranyl)-sn-glycerol 1-phosphate + CTP + H(+) = CDP-2,3-bis-O-(geranylgeranyl)-sn-glycerol + diphosphate. It functions in the pathway membrane lipid metabolism; glycerophospholipid metabolism. Its function is as follows. Catalyzes the formation of CDP-2,3-bis-(O-geranylgeranyl)-sn-glycerol (CDP-archaeol) from 2,3-bis-(O-geranylgeranyl)-sn-glycerol 1-phosphate (DGGGP) and CTP. This reaction is the third ether-bond-formation step in the biosynthesis of archaeal membrane lipids. In Pyrococcus furiosus (strain ATCC 43587 / DSM 3638 / JCM 8422 / Vc1), this protein is CDP-archaeol synthase.